The following is a 407-amino-acid chain: Carbamoyl phosphate synthase small chain (407 aa).

Positions 1–205 (MTETTSKTAP…LADGYGEQDT (205 aa)) are CPSase. Positions 60, 257, and 259 each coordinate L-glutamine. Residues 209 to 397 (HVVALDFGVK…INLIREKKGE (189 aa)) enclose the Glutamine amidotransferase type-1 domain. C286 functions as the Nucleophile in the catalytic mechanism. L-glutamine-binding residues include L287, Q290, N328, G330, and F331. Residues H370 and E372 contribute to the active site.

Belongs to the CarA family. As to quaternary structure, composed of two chains; the small (or glutamine) chain promotes the hydrolysis of glutamine to ammonia, which is used by the large (or ammonia) chain to synthesize carbamoyl phosphate. Tetramer of heterodimers (alpha,beta)4.

The catalysed reaction is hydrogencarbonate + L-glutamine + 2 ATP + H2O = carbamoyl phosphate + L-glutamate + 2 ADP + phosphate + 2 H(+). It catalyses the reaction L-glutamine + H2O = L-glutamate + NH4(+). It functions in the pathway amino-acid biosynthesis; L-arginine biosynthesis; carbamoyl phosphate from bicarbonate: step 1/1. Its pathway is pyrimidine metabolism; UMP biosynthesis via de novo pathway; (S)-dihydroorotate from bicarbonate: step 1/3. Functionally, small subunit of the glutamine-dependent carbamoyl phosphate synthetase (CPSase). CPSase catalyzes the formation of carbamoyl phosphate from the ammonia moiety of glutamine, carbonate, and phosphate donated by ATP, constituting the first step of 2 biosynthetic pathways, one leading to arginine and/or urea and the other to pyrimidine nucleotides. The small subunit (glutamine amidotransferase) binds and cleaves glutamine to supply the large subunit with the substrate ammonia. The chain is Carbamoyl phosphate synthase small chain from Brucella anthropi (strain ATCC 49188 / DSM 6882 / CCUG 24695 / JCM 21032 / LMG 3331 / NBRC 15819 / NCTC 12168 / Alc 37) (Ochrobactrum anthropi).